The sequence spans 690 residues: Elongation factor G (690 aa).

Residues 8 to 283 (SKCRNIGIMA…AVVDFLPAPN (276 aa)) enclose the tr-type G domain. Residues 17–24 (AHIDAGKT), 81–85 (DTPGH), and 135–138 (NKMD) each bind GTP.

It belongs to the TRAFAC class translation factor GTPase superfamily. Classic translation factor GTPase family. EF-G/EF-2 subfamily.

It localises to the cytoplasm. Functionally, catalyzes the GTP-dependent ribosomal translocation step during translation elongation. During this step, the ribosome changes from the pre-translocational (PRE) to the post-translocational (POST) state as the newly formed A-site-bound peptidyl-tRNA and P-site-bound deacylated tRNA move to the P and E sites, respectively. Catalyzes the coordinated movement of the two tRNA molecules, the mRNA and conformational changes in the ribosome. This is Elongation factor G from Ehrlichia canis (strain Jake).